The sequence spans 102 residues: Acid shock protein (102 aa).

A signal peptide spans 1–21 (MKKVLALVVAAAMGLSSAAFA). Residues 22–41 (AETATTPAPTATTTKAAPAK) show a composition bias toward low complexity. Positions 22 to 58 (AETATTPAPTATTTKAAPAKTTHHKKQHKAAPAQKAQ) are excised as a propeptide. The segment at 22 to 102 (AETATTPAPT…PAKPAAQPAA (81 aa)) is disordered. Positions 80-90 (AAKKHAGKHSH) are enriched in basic residues. Over residues 91 to 102 (QQPAKPAAQPAA) the composition is skewed to low complexity.

The protein belongs to the Asr family. Post-translationally, proteolytic processing gives rise to the active protein.

The protein localises to the periplasm. In terms of biological role, required for growth and/or survival at acidic conditions. The chain is Acid shock protein from Escherichia coli (strain 55989 / EAEC).